The following is a 337-amino-acid chain: Cysteine proteinase 3 (337 aa).

The first 21 residues, 1–21 (MRLSITLIFTLIVLSISFISA), serve as a signal peptide directing secretion. A propeptide spans 22–120 (GNVFSHKQYQ…GLRLNRPQFK (99 aa)) (activation peptide). 3 disulfide bridges follow: cysteine 142–cysteine 185, cysteine 176–cysteine 219, and cysteine 277–cysteine 326. Cysteine 145 is a catalytic residue. Active-site residues include histidine 284 and asparagine 304.

Belongs to the peptidase C1 family.

It is found in the lysosome. This Dictyostelium discoideum (Social amoeba) protein is Cysteine proteinase 3 (cprC).